Consider the following 137-residue polypeptide: Nucleoside diphosphate kinase (137 aa).

Residues Lys-9, Phe-57, Arg-85, Thr-91, Arg-102, and Asn-112 each contribute to the ATP site. His-115 functions as the Pros-phosphohistidine intermediate in the catalytic mechanism.

The protein belongs to the NDK family. In terms of assembly, homotetramer. Requires Mg(2+) as cofactor.

It is found in the cytoplasm. The enzyme catalyses a 2'-deoxyribonucleoside 5'-diphosphate + ATP = a 2'-deoxyribonucleoside 5'-triphosphate + ADP. It catalyses the reaction a ribonucleoside 5'-diphosphate + ATP = a ribonucleoside 5'-triphosphate + ADP. In terms of biological role, major role in the synthesis of nucleoside triphosphates other than ATP. The ATP gamma phosphate is transferred to the NDP beta phosphate via a ping-pong mechanism, using a phosphorylated active-site intermediate. This chain is Nucleoside diphosphate kinase, found in Campylobacter jejuni subsp. jejuni serotype O:2 (strain ATCC 700819 / NCTC 11168).